A 194-amino-acid polypeptide reads, in one-letter code: dITP/XTP pyrophosphatase (194 aa).

Position 8 to 13 (8 to 13 (TSNPGK)) interacts with substrate. 2 residues coordinate Mg(2+): Glu38 and Asp67. The active-site Proton acceptor is Asp67. Residues Ser68, 152–155 (FGYD), Lys175, and 180–181 (HR) contribute to the substrate site.

The protein belongs to the HAM1 NTPase family. In terms of assembly, homodimer. Mg(2+) serves as cofactor.

It catalyses the reaction XTP + H2O = XMP + diphosphate + H(+). It carries out the reaction dITP + H2O = dIMP + diphosphate + H(+). The enzyme catalyses ITP + H2O = IMP + diphosphate + H(+). In terms of biological role, pyrophosphatase that catalyzes the hydrolysis of nucleoside triphosphates to their monophosphate derivatives, with a high preference for the non-canonical purine nucleotides XTP (xanthosine triphosphate), dITP (deoxyinosine triphosphate) and ITP. Seems to function as a house-cleaning enzyme that removes non-canonical purine nucleotides from the nucleotide pool, thus preventing their incorporation into DNA/RNA and avoiding chromosomal lesions. This chain is dITP/XTP pyrophosphatase, found in Legionella pneumophila (strain Lens).